Consider the following 495-residue polypeptide: Lanosterol 14-alpha demethylase erg11 (495 aa).

A helical membrane pass occupies residues 2–22; it reads AFSLVSILLSIALAWYVGYII. C442 contacts heme.

This sequence belongs to the cytochrome P450 family. As to quaternary structure, interacts with dap1. Heme serves as cofactor.

Its subcellular location is the endoplasmic reticulum. It localises to the membrane. The catalysed reaction is a 14alpha-methyl steroid + 3 reduced [NADPH--hemoprotein reductase] + 3 O2 = a Delta(14) steroid + formate + 3 oxidized [NADPH--hemoprotein reductase] + 4 H2O + 4 H(+). It carries out the reaction a 14alpha-methyl steroid + reduced [NADPH--hemoprotein reductase] + O2 = a 14alpha-hydroxymethyl steroid + oxidized [NADPH--hemoprotein reductase] + H2O + H(+). The enzyme catalyses a 14alpha-hydroxymethyl steroid + reduced [NADPH--hemoprotein reductase] + O2 = a 14alpha-formyl steroid + oxidized [NADPH--hemoprotein reductase] + 2 H2O + H(+). It catalyses the reaction a 14alpha-formyl steroid + reduced [NADPH--hemoprotein reductase] + O2 = a Delta(14) steroid + formate + oxidized [NADPH--hemoprotein reductase] + H2O + 2 H(+). The catalysed reaction is lanosterol + 3 reduced [NADPH--hemoprotein reductase] + 3 O2 = 4,4-dimethyl-5alpha-cholesta-8,14,24-trien-3beta-ol + formate + 3 oxidized [NADPH--hemoprotein reductase] + 4 H2O + 4 H(+). It carries out the reaction lanosterol + reduced [NADPH--hemoprotein reductase] + O2 = 32-hydroxylanosterol + oxidized [NADPH--hemoprotein reductase] + H2O + H(+). The enzyme catalyses 32-hydroxylanosterol + reduced [NADPH--hemoprotein reductase] + O2 = 32-oxolanosterol + oxidized [NADPH--hemoprotein reductase] + 2 H2O + H(+). It catalyses the reaction 32-oxolanosterol + reduced [NADPH--hemoprotein reductase] + O2 = 4,4-dimethyl-5alpha-cholesta-8,14,24-trien-3beta-ol + formate + oxidized [NADPH--hemoprotein reductase] + H2O + 2 H(+). The catalysed reaction is eburicol + 3 reduced [NADPH--hemoprotein reductase] + 3 O2 = 14-demethyleburicol + formate + 3 oxidized [NADPH--hemoprotein reductase] + 4 H2O + 4 H(+). It carries out the reaction eburicol + reduced [NADPH--hemoprotein reductase] + O2 = 32-hydroxyeburicol + oxidized [NADPH--hemoprotein reductase] + H2O + H(+). The enzyme catalyses 32-hydroxyeburicol + reduced [NADPH--hemoprotein reductase] + O2 = 32-oxoeburicol + oxidized [NADPH--hemoprotein reductase] + 2 H2O + H(+). It catalyses the reaction 32-oxoeburicol + reduced [NADPH--hemoprotein reductase] + O2 = 14-demethyleburicol + formate + oxidized [NADPH--hemoprotein reductase] + H2O + 2 H(+). It participates in steroid biosynthesis; zymosterol biosynthesis; zymosterol from lanosterol: step 1/6. Its pathway is steroid metabolism; ergosterol biosynthesis. Functionally, sterol 14alpha-demethylase that plays a critical role in the third module of ergosterol biosynthesis pathway, being ergosterol the major sterol component in fungal membranes that participates in a variety of functions. The third module or late pathway involves the ergosterol synthesis itself through consecutive reactions that mainly occur in the endoplasmic reticulum (ER) membrane. In filamentous fungi, during the initial step of this module, lanosterol (lanosta-8,24-dien-3beta-ol) can be metabolized to eburicol. Sterol 14alpha-demethylase catalyzes the three-step oxidative removal of the 14alpha-methyl group (C-32) of both these sterols in the form of formate, and converts eburicol and lanosterol to 14-demethyleburicol (4,4,24-trimethylergosta-8,14,24(28)-trienol) and 4,4-dimethyl-5alpha-cholesta-8,14,24-trien-3beta-ol, respectively, which are further metabolized by other enzymes in the pathway to ergosterol. Can also use substrates not intrinsic to fungi, such as 24,25-dihydrolanosterol (DHL), producing 4,4-dimethyl-8,14-cholestadien-3-beta-ol, but at lower rates than the endogenous substrates. The sequence is that of Lanosterol 14-alpha demethylase erg11 from Schizosaccharomyces pombe (strain 972 / ATCC 24843) (Fission yeast).